A 381-amino-acid chain; its full sequence is Probable peptidoglycan glycosyltransferase FtsW (381 aa).

Helical transmembrane passes span 16 to 36, 56 to 76, 80 to 100, 145 to 165, 168 to 188, 191 to 211, 274 to 294, 312 to 332, and 343 to 363; these read LVLLLMVVALTSFGIVMVYSA, LIFALVGCVGALVTMRIDYQL, WAVPLLFVSLILLVLVLIPGI, LLSAGFLPYMVVLMILLGLLL, PDMGAALTLAAVTIIMLFAAG, LIFILGSGMVAMPFVVYLVVH, VIGEELGFIGVIVIIGMFFIL, FLALGIAVLFAIEAVVNMAVV, and LPFLSYGGSSLLISLFAVGIL.

This sequence belongs to the SEDS family. FtsW subfamily.

It localises to the cell inner membrane. It catalyses the reaction [GlcNAc-(1-&gt;4)-Mur2Ac(oyl-L-Ala-gamma-D-Glu-L-Lys-D-Ala-D-Ala)](n)-di-trans,octa-cis-undecaprenyl diphosphate + beta-D-GlcNAc-(1-&gt;4)-Mur2Ac(oyl-L-Ala-gamma-D-Glu-L-Lys-D-Ala-D-Ala)-di-trans,octa-cis-undecaprenyl diphosphate = [GlcNAc-(1-&gt;4)-Mur2Ac(oyl-L-Ala-gamma-D-Glu-L-Lys-D-Ala-D-Ala)](n+1)-di-trans,octa-cis-undecaprenyl diphosphate + di-trans,octa-cis-undecaprenyl diphosphate + H(+). It functions in the pathway cell wall biogenesis; peptidoglycan biosynthesis. Functionally, peptidoglycan polymerase that is essential for cell division. This is Probable peptidoglycan glycosyltransferase FtsW from Trichlorobacter lovleyi (strain ATCC BAA-1151 / DSM 17278 / SZ) (Geobacter lovleyi).